A 439-amino-acid chain; its full sequence is 3-phosphoshikimate 1-carboxyvinyltransferase (439 aa).

3 residues coordinate 3-phosphoshikimate: Lys27, Ser28, and Arg32. Phosphoenolpyruvate is bound at residue Lys27. 2 residues coordinate phosphoenolpyruvate: Gly101 and Arg130. 3-phosphoshikimate is bound by residues Ser175, Gln177, Asp326, and Lys353. Phosphoenolpyruvate is bound at residue Gln177. Asp326 serves as the catalytic Proton acceptor. Residues Arg357 and Arg399 each coordinate phosphoenolpyruvate.

Belongs to the EPSP synthase family. Monomer.

The protein resides in the cytoplasm. The enzyme catalyses 3-phosphoshikimate + phosphoenolpyruvate = 5-O-(1-carboxyvinyl)-3-phosphoshikimate + phosphate. Its pathway is metabolic intermediate biosynthesis; chorismate biosynthesis; chorismate from D-erythrose 4-phosphate and phosphoenolpyruvate: step 6/7. Its function is as follows. Catalyzes the transfer of the enolpyruvyl moiety of phosphoenolpyruvate (PEP) to the 5-hydroxyl of shikimate-3-phosphate (S3P) to produce enolpyruvyl shikimate-3-phosphate and inorganic phosphate. This is 3-phosphoshikimate 1-carboxyvinyltransferase from Synechococcus sp. (strain WH7803).